The following is a 509-amino-acid chain: Cytochrome P450 monooxygenase CYP512U6 (509 aa).

A helical membrane pass occupies residues 12 to 29; it reads VFACVAVVIAIYAVRWYT. C446 contacts heme.

It belongs to the cytochrome P450 family. It depends on heme as a cofactor.

The protein resides in the membrane. The catalysed reaction is ganoderate DM + reduced [NADPH--hemoprotein reductase] + O2 = hainanate A + oxidized [NADPH--hemoprotein reductase] + H2O + H(+). It carries out the reaction ganoderate TR + reduced [NADPH--hemoprotein reductase] + O2 = ganoderate Jc + oxidized [NADPH--hemoprotein reductase] + H2O + H(+). Its pathway is secondary metabolite biosynthesis; terpenoid biosynthesis. Cytochrome P450 monooxygenase that hydroxylates the ganoderic acids DM and TR at the C-23 position to produce hainanic acid A and ganoderic acid Jc, respectively. The sequence is that of Cytochrome P450 monooxygenase CYP512U6 from Ganoderma lucidum (Ling zhi medicinal fungus).